Reading from the N-terminus, the 382-residue chain is 6-hydroxynicotinate 3-monooxygenase (382 aa).

Positions 1–25 (MRGRQKIAIVGAGLGGAAAATLLQQ) are cleaved as a signal peptide. Residues G15, 34–35 (EQ), H47, R108, and L130 contribute to the FAD site. H47 functions as the Proton acceptor in the catalytic mechanism. Residue Y215 is the Proton acceptor of the active site. Residues D294 and 307-308 (AC) contribute to the FAD site.

This sequence belongs to the 6-hydroxynicotinate 3-monooxygenase family. In terms of assembly, monomer. FAD is required as a cofactor.

It carries out the reaction 6-hydroxynicotinate + NADH + O2 + 2 H(+) = 2,5-dihydroxypyridine + CO2 + NAD(+) + H2O. Its pathway is cofactor degradation; nicotinate degradation. Functionally, flavin-dependent monooxygenase (FMO) that catalyzes the decarboxylative hydroxylation of 6-hydroxynicotinic acid (6-HNA) to 2,5-dihydroxypyridine (2,5-DHP) with concomitant oxidation of NADH, a step in the aerobic nicotinate degradation pathway. The polypeptide is 6-hydroxynicotinate 3-monooxygenase (Pseudomonas putida (strain ATCC 47054 / DSM 6125 / CFBP 8728 / NCIMB 11950 / KT2440)).